Reading from the N-terminus, the 452-residue chain is Prephenate dehydrogenase [NADP(+)] (452 aa).

14-43 (KVIGIIGLGDMGLLYANKFTDAGWGVICCD) serves as a coordination point for NADP(+). The region spanning 14–297 (KVIGIIGLGD…GKHTGLLLLD (284 aa)) is the Prephenate/arogenate dehydrogenase domain.

The protein belongs to the prephenate/arogenate dehydrogenase family.

It carries out the reaction prephenate + NADP(+) = 3-(4-hydroxyphenyl)pyruvate + CO2 + NADPH. It functions in the pathway amino-acid biosynthesis; L-tyrosine biosynthesis; (4-hydroxyphenyl)pyruvate from prephenate (NADP(+) route): step 1/1. The polypeptide is Prephenate dehydrogenase [NADP(+)] (TYR1) (Saccharomyces cerevisiae (strain ATCC 204508 / S288c) (Baker's yeast)).